A 718-amino-acid polypeptide reads, in one-letter code: MQEFDKSISFDGRDIRLKMGTLAPQAGGSVLIQSGDTAVLVTATRAKGRDGIDFLPLTVDYEGRLYAAGRIPGGFLRREGRPPEKATLISRLIDRPLRPLFPHWLRDELQIVATTLSMDEEVPPDVLAVTGASVAVILAQIPFKGPMAAVRVGLVGDDFIINPTYREVHNGDLDLVVAGTPAGIVMVEAGANQLPEQDIIEAIDFGYEAVQDLINAQRELMTDLGITLATSEPPPVNTAVEEFIANRASKKIITVLGQFDLGKDGRDAALDEIKATEVETAIAELPETDPVKQSVEEDPKLVGNLYKALTKKLMRKQIVDDGVRVDGRKLEQVRPISCEVGFLPRRVHGSGLFNRGLTQVLSLATLGSPGDAQDLADDLHPEDEKRYLHHYNFPPYSVGEARPMRSPGRREIGHGALAERAIIPVLPPQEDFPYVVRVVSEVLSSNGSTSMGSVCGSTLALMDAGVPIKKPVSGAAMGLIKEGDEIRILTDIQGIEDFLGDMDFKVAGTDSGITALQMDMKIDGLSMEVVSKAIMQALPARLHILDKMLATIREPRPELSPFAPRLLTLKIEPEHIGMVIGPGGKTIKGITEQTSCKIDIADDGTVTIASSEGERAERARQMIYNMTRKLNEGEVYLGRVTRIIPIGAFVEVLPGKEGMIHISQLTEGRVGKVEDEVGVGDEVIVKVREIDSKGRLNLTRLGIHPDEAAEARRNASRG.

The Mg(2+) site is built by Asp-497 and Asp-503. Residues 564–623 (PRLLTLKIEPEHIGMVIGPGGKTIKGITEQTSCKIDIADDGTVTIASSEGERAERARQMI) enclose the KH domain. The S1 motif domain occupies 633–701 (GEVYLGRVTR…SKGRLNLTRL (69 aa)).

Belongs to the polyribonucleotide nucleotidyltransferase family. In terms of assembly, interacts with RNase E (rne). Requires Mg(2+) as cofactor.

The protein resides in the cytoplasm. It carries out the reaction RNA(n+1) + phosphate = RNA(n) + a ribonucleoside 5'-diphosphate. Functionally, involved in mRNA degradation. Catalyzes the phosphorolysis of single-stranded polyribonucleotides processively in the 3'- to 5'-direction. The chain is Polyribonucleotide nucleotidyltransferase from Synechocystis sp. (strain ATCC 27184 / PCC 6803 / Kazusa).